The sequence spans 445 residues: StAR-related lipid transfer protein 3 (445 aa).

The Cytoplasmic segment spans residues methionine 1–arginine 51. One can recognise an MENTAL domain in the interval isoleucine 46–serine 217. The chain crosses the membrane as a helical span at residues threonine 52–leucine 72. Residues asparagine 73 to serine 94 lie on the Extracellular side of the membrane. Residues phenylalanine 95–valine 115 form a helical membrane-spanning segment. Residues leucine 116–histidine 120 are Cytoplasmic-facing. The helical transmembrane segment at tryptophan 121–leucine 141 threads the bilayer. Residues serine 142–glycine 148 are Extracellular-facing. A helical transmembrane segment spans residues alanine 149–leucine 169. Topologically, residues aspartate 170–alanine 445 are cytoplasmic. 2 short sequence motifs (FFAT) span residues glutamine 206–glutamate 212 and phenylalanine 207–glutamate 212. Phosphoserine occurs at positions 209, 217, and 221. One can recognise an START domain in the interval valine 248–alanine 443.

Belongs to the STARD3 family. As to quaternary structure, homodimer. Interacts (via the MENTAL domain) with STARD3NL. Interacts (via phosphorylated FFAT motif) with VAPA (via MSP domain). Interacts (via phosphorylated FFAT motif) with VAPB (via MSP domain). Interacts (via phosphorylated FFAT motif) with MOSPD2 (via MSP domain); this interaction allows enrichment of MOSPD2 around endosomes. Post-translationally, phosphorylation at Ser-209 is necessary and sufficient for the direct interaction of the phosphorylated FFAT motif with the MSP domain of MOSPD2, VAPA and VAPB and allows the tethering of two membranes that participates in the formation of ER-endosome contacts. Phosphorylation of the FFAT motif leads to conformation changes. Additional phosphorylations around the core FFAT motif (QFYSPPE) are not essential but strengthen the interaction with MOSPD2, VAPA and VAPB. Phosphorylation at Ser-209 of FFAT motif drives membrane tethering between the endoplasmic reticulum and late endosomes via interaction with VAPA and VAPB that in turn allows the efficient transport of sterol mediated by the START domain. In terms of tissue distribution, present in retina. Localizes to all neurons of macular retina and especially cone inner segments and axons (at protein level).

Its subcellular location is the late endosome membrane. It catalyses the reaction cholesterol(in) = cholesterol(out). Functionally, sterol-binding protein that mediates cholesterol transport from the endoplasmic reticulum to endosomes. The sterol transport mechanism is triggered by phosphorylation of FFAT motif that leads to membrane tethering between the endoplasmic reticulum and late endosomes via interaction with VAPA and VAPB. Acts as a lipid transfer protein that redirects sterol to the endosome at the expense of the cell membrane and favors membrane formation inside endosomes. May also mediate cholesterol transport between other membranes, such as mitochondria membrane or cell membrane. However, such results need additional experimental evidences; probably mainly mediates cholesterol transport from the endoplasmic reticulum to endosomes. Does not activate transcriptional cholesterol sensing. Able to bind other lipids, such as lutein, a xanthophyll carotenoids that form the macular pigment of the retina. Able to bind other lipids, such as lutein, a xanthophyll carotenoids that form the macular pigment of the retina. The sequence is that of StAR-related lipid transfer protein 3 from Macaca mulatta (Rhesus macaque).